We begin with the raw amino-acid sequence, 154 residues long: Mitochondrial fission 1 protein (154 aa).

At 1–124 (MEDLLNEVVP…KEIDKEVAKG (124 aa)) the chain is on the cytoplasmic side. Residues 125–145 (MVVAGGAALVLGGILGLGIAM) traverse the membrane as a helical segment. Residues 146–154 (ARNKQKREK) lie on the Mitochondrial intermembrane side of the membrane.

Belongs to the FIS1 family.

The protein resides in the mitochondrion outer membrane. In terms of biological role, involved in the fragmentation of the mitochondrial network and its perinuclear clustering. Functions downstream of Pink1 and upstream of Drp1 to regulate mitochondrial fission. This is Mitochondrial fission 1 protein from Drosophila melanogaster (Fruit fly).